The sequence spans 278 residues: NH(3)-dependent NAD(+) synthetase (278 aa).

43–50 (GISGGVDS) lines the ATP pocket. Position 49 (Asp-49) interacts with Mg(2+). Arg-146 serves as a coordination point for deamido-NAD(+). ATP is bound at residue Thr-166. A Mg(2+)-binding site is contributed by Glu-171. Deamido-NAD(+) is bound by residues Lys-179 and Asp-186. ATP contacts are provided by Lys-195 and Thr-217. 266-267 (HK) contacts deamido-NAD(+).

It belongs to the NAD synthetase family. Homodimer.

It carries out the reaction deamido-NAD(+) + NH4(+) + ATP = AMP + diphosphate + NAD(+) + H(+). It functions in the pathway cofactor biosynthesis; NAD(+) biosynthesis; NAD(+) from deamido-NAD(+) (ammonia route): step 1/1. Catalyzes the ATP-dependent amidation of deamido-NAD to form NAD. Uses ammonia as a nitrogen source. In Pseudoalteromonas translucida (strain TAC 125), this protein is NH(3)-dependent NAD(+) synthetase.